We begin with the raw amino-acid sequence, 616 residues long: Membrane protein insertase YidC (616 aa).

The chain crosses the membrane as a helical span at residues 8-28 (MFVAIALSLVVLLGWHYFVTG). The segment at 33–85 (RQRQAAQSQTAQTGAPQTADGIPSPSPREGGPNAPAPGTLPGAAAQGPVSRED) is disordered. Composition is skewed to low complexity over residues 36-51 (QAAQ…PQTA) and 62-80 (GGPN…AQGP). Transmembrane regions (helical) follow at residues 386-406 (LLGN…LFFL), 460-480 (WPVL…FITI), 516-536 (YIPI…FIQM), and 551-571 (FAFM…GLVI).

Belongs to the OXA1/ALB3/YidC family. Type 1 subfamily. As to quaternary structure, interacts with the Sec translocase complex via SecD. Specifically interacts with transmembrane segments of nascent integral membrane proteins during membrane integration.

It is found in the cell inner membrane. Required for the insertion and/or proper folding and/or complex formation of integral membrane proteins into the membrane. Involved in integration of membrane proteins that insert both dependently and independently of the Sec translocase complex, as well as at least some lipoproteins. Aids folding of multispanning membrane proteins. The polypeptide is Membrane protein insertase YidC (Methylorubrum extorquens (strain PA1) (Methylobacterium extorquens)).